The chain runs to 71 residues: MFLSLPMLTVLIPLVSLAGLFYSASVEDDFPQGCTSTTSLCFYSLLLPITIPVYVFFHLWTWMGIKLFRHN.

The Cytoplasmic segment spans residues Met-1–Leu-3. A helical transmembrane segment spans residues Ser-4–Val-26. The Lumenal portion of the chain corresponds to Glu-27–Ser-44. The chain crosses the membrane as a helical span at residues Leu-45–Ile-65. At Lys-66–Asn-71 the chain is on the cytoplasmic side.

Component of the glycosylphosphatidylinositol-N-acetylglucosaminyltransferase (GPI-GnT) complex composed at least by PIGA, PIGC, PIGH, PIGP, PIGQ, PIGY and DPM2. Interacts directly with PIGA; this interaction regulates glycosylphosphatidylinositol-N-acetylglucosaminyltransferase activity. Does not interact with Ras proteins.

It is found in the endoplasmic reticulum membrane. The protein operates within glycolipid biosynthesis; glycosylphosphatidylinositol-anchor biosynthesis. Functionally, part of the glycosylphosphatidylinositol-N-acetylglucosaminyltransferase (GPI-GnT) complex that catalyzes the transfer of N-acetylglucosamine from UDP-N-acetylglucosamine to phosphatidylinositol and participates in the first step of GPI biosynthesis. May act by regulating the catalytic subunit PIGA. The polypeptide is Phosphatidylinositol N-acetylglucosaminyltransferase subunit Y (Bos taurus (Bovine)).